The primary structure comprises 805 residues: Ubiquitin carboxyl-terminal hydrolase 5 (805 aa).

The Rhodanese domain maps to 159 to 283; sequence HGDALLLIDV…WVKLGGAYQS (125 aa). A disordered region spans residues 359 to 380; it reads RNSPTVQKFSPHPPTTLSKLNT. The USP domain occupies 446-804; sequence VGLENIGNCC…SAYVLFYERI (359 aa). The active-site Nucleophile is C455. Catalysis depends on H761, which acts as the Proton acceptor.

This sequence belongs to the peptidase C19 family.

It catalyses the reaction Thiol-dependent hydrolysis of ester, thioester, amide, peptide and isopeptide bonds formed by the C-terminal Gly of ubiquitin (a 76-residue protein attached to proteins as an intracellular targeting signal).. The protein is Ubiquitin carboxyl-terminal hydrolase 5 (UBP5) of Saccharomyces cerevisiae (strain ATCC 204508 / S288c) (Baker's yeast).